A 1318-amino-acid chain; its full sequence is Uromodulin-like 1 (1318 aa).

The first 21 residues, 1–21 (MLRTSGLALLALVSAVGPSQA), serve as a signal peptide directing secretion. Over 22 to 1272 (SGFTEKGLSL…HAEAGLGAGY (1251 aa)) the chain is Extracellular. Residues 33-106 (GYQLCSHRVT…YEQLGLYCVL (74 aa)) form the EMI domain. Disulfide bonds link C37-C94, C61-C70, and C93-C104. Residue N89 is glycosylated (N-linked (GlcNAc...) asparagine). N-linked (GlcNAc...) asparagine glycosylation occurs at N109. Positions 114-158 (FTSRPGACPAEGPEPSTSPCSLDIDCPGLEKCCPWSGGRYCMAPA) constitute a WAP domain. An N-linked (GlcNAc...) asparagine glycan is attached at N172. Residues 264–313 (DVNECFYEELNACSGRELCANLEGSYWCVCHQEAPATSPRKLNLEWEDCP) enclose the EGF-like 1; calcium-binding domain. Residues 314 to 398 (PVSDYVVLNV…TTLTIKTNAQ (85 aa)) enclose the Fibronectin type-III 1 domain. Residues N322, N335, and N417 are each glycosylated (N-linked (GlcNAc...) asparagine). The 115-residue stretch at 396–510 (NAQVFEVTIK…QGTRVQDWDE (115 aa)) folds into the SEA 1 domain. The 46-residue stretch at 507–552 (DWDECVDSAEHDCSPAAWCINLEGSYTCQCRTTRDATPSRAGRACE) folds into the EGF-like 2; calcium-binding domain. Disulfide bonds link C511–C525, C519–C534, and C536–C551. N-linked (GlcNAc...) asparagine glycosylation occurs at N585. The disordered stretch occupies residues 593–655 (GYPQGTPAAG…PSPTEDPTGH (63 aa)). The 90-residue stretch at 702 to 791 (VPVSIGRIMV…HLKVRTAARK (90 aa)) folds into the Fibronectin type-III 2 domain. N-linked (GlcNAc...) asparagine glycosylation is present at N713. The 113-residue stretch at 788-900 (AARKLIGKVR…GDTFIQDYDE (113 aa)) folds into the SEA 2 domain. An EGF-like 3; calcium-binding domain is found at 897 to 938 (DYDECERKEDDCVPGTSCRNTLGSFTCSCEGGAPDFPVEYSE). Disulfide bonds link C901-C914 and C908-C923. The interval 938–957 (ERPCEGDSPGNETWATSPER) is disordered. N-linked (GlcNAc...) asparagine glycosylation is found at N984 and N1050. Residues 992–1235 (LCEIEKVVVA…ATCKINCNNF (244 aa)) enclose the ZP domain. C1157 and C1215 form a disulfide bridge. A helical membrane pass occupies residues 1273–1293 (VVLIVVAIFVLVAGTATLLIV). Residues 1294–1318 (RYQRMNGRYNFKIQSNNFSYQVFYE) are Cytoplasmic-facing.

Isoform 4 is expressed at low level in kidney, testis and fetal thymus. Isoform 3 is expressed at low level in prostate, testis and fetal thymus.

It localises to the cell membrane. The protein localises to the cytoplasm. In Homo sapiens (Human), this protein is Uromodulin-like 1 (UMODL1).